The primary structure comprises 189 residues: 6,7-dimethyl-8-ribityllumazine synthase (189 aa).

5-amino-6-(D-ribitylamino)uracil-binding positions include tryptophan 31, 65–67 (SFE), and 89–91 (CVI). Residue 94–95 (ET) coordinates (2S)-2-hydroxy-3-oxobutyl phosphate. The Proton donor role is filled by histidine 97. Residue phenylalanine 122 participates in 5-amino-6-(D-ribitylamino)uracil binding. Arginine 136 lines the (2S)-2-hydroxy-3-oxobutyl phosphate pocket.

It belongs to the DMRL synthase family.

It catalyses the reaction (2S)-2-hydroxy-3-oxobutyl phosphate + 5-amino-6-(D-ribitylamino)uracil = 6,7-dimethyl-8-(1-D-ribityl)lumazine + phosphate + 2 H2O + H(+). Its pathway is cofactor biosynthesis; riboflavin biosynthesis; riboflavin from 2-hydroxy-3-oxobutyl phosphate and 5-amino-6-(D-ribitylamino)uracil: step 1/2. Functionally, catalyzes the formation of 6,7-dimethyl-8-ribityllumazine by condensation of 5-amino-6-(D-ribitylamino)uracil with 3,4-dihydroxy-2-butanone 4-phosphate. This is the penultimate step in the biosynthesis of riboflavin. The polypeptide is 6,7-dimethyl-8-ribityllumazine synthase (Flavobacterium psychrophilum (strain ATCC 49511 / DSM 21280 / CIP 103535 / JIP02/86)).